The following is a 451-amino-acid chain: Methylenetetrahydrofolate--tRNA-(uracil-5-)-methyltransferase TrmFO (451 aa).

Gly18 to Gly23 contributes to the FAD binding site.

It belongs to the MnmG family. TrmFO subfamily. FAD serves as cofactor.

It localises to the cytoplasm. It carries out the reaction uridine(54) in tRNA + (6R)-5,10-methylene-5,6,7,8-tetrahydrofolate + NADH + H(+) = 5-methyluridine(54) in tRNA + (6S)-5,6,7,8-tetrahydrofolate + NAD(+). The catalysed reaction is uridine(54) in tRNA + (6R)-5,10-methylene-5,6,7,8-tetrahydrofolate + NADPH + H(+) = 5-methyluridine(54) in tRNA + (6S)-5,6,7,8-tetrahydrofolate + NADP(+). In terms of biological role, catalyzes the folate-dependent formation of 5-methyl-uridine at position 54 (M-5-U54) in all tRNAs. The chain is Methylenetetrahydrofolate--tRNA-(uracil-5-)-methyltransferase TrmFO from Synechococcus sp. (strain JA-3-3Ab) (Cyanobacteria bacterium Yellowstone A-Prime).